The following is a 319-amino-acid chain: Aliphatic sulfonates import ATP-binding protein SsuB (319 aa).

Residues 63 to 282 (VTLSGVSKRF…ARASAAFAAL (220 aa)) enclose the ABC transporter domain. 95-102 (GRSGCGKS) is a binding site for ATP.

This sequence belongs to the ABC transporter superfamily. Aliphatic sulfonates importer (TC 3.A.1.17.2) family. The complex is composed of two ATP-binding proteins (SsuB), two transmembrane proteins (SsuC) and a solute-binding protein (SsuA).

The protein localises to the cell inner membrane. It carries out the reaction ATP + H2O + aliphatic sulfonate-[sulfonate-binding protein]Side 1 = ADP + phosphate + aliphatic sulfonateSide 2 + [sulfonate-binding protein]Side 1.. In terms of biological role, part of the ABC transporter complex SsuABC involved in aliphatic sulfonates import. Responsible for energy coupling to the transport system. The polypeptide is Aliphatic sulfonates import ATP-binding protein SsuB (Burkholderia ambifaria (strain ATCC BAA-244 / DSM 16087 / CCUG 44356 / LMG 19182 / AMMD) (Burkholderia cepacia (strain AMMD))).